Consider the following 328-residue polypeptide: Malate dehydrogenase (328 aa).

12 to 18 (GAAGQIG) lines the NAD(+) pocket. Residues arginine 95 and arginine 101 each contribute to the substrate site. NAD(+) contacts are provided by residues asparagine 108, glutamine 115, and 132 to 134 (VGN). Substrate contacts are provided by asparagine 134 and arginine 165. Histidine 190 acts as the Proton acceptor in catalysis.

The protein belongs to the LDH/MDH superfamily. MDH type 2 family.

It carries out the reaction (S)-malate + NAD(+) = oxaloacetate + NADH + H(+). Its function is as follows. Catalyzes the reversible oxidation of malate to oxaloacetate. The polypeptide is Malate dehydrogenase (Variovorax paradoxus (strain S110)).